Consider the following 506-residue polypeptide: GTPase Der (506 aa).

EngA-type G domains follow at residues 3-166 (PVVA…GEQL) and 218-391 (IKIA…ACAT). GTP-binding positions include 9–16 (GRPNVGKS), 56–60 (DTGGI), 118–121 (NKTD), 224–231 (GRPNVGKS), 271–275 (DTAGV), and 336–339 (NKWD). A KH-like domain is found at 392 to 476 (QKTSTSMLTR…PIRIQFQEGN (85 aa)).

The protein belongs to the TRAFAC class TrmE-Era-EngA-EngB-Septin-like GTPase superfamily. EngA (Der) GTPase family. Associates with the 50S ribosomal subunit.

In terms of biological role, GTPase that plays an essential role in the late steps of ribosome biogenesis. This Actinobacillus pleuropneumoniae serotype 3 (strain JL03) protein is GTPase Der.